The following is a 235-amino-acid chain: Large ribosomal subunit protein uL3 (235 aa).

The segment at 138–157 is disordered; it reads SVSHRSHGSTGGRQDPGKTF. Gln-151 carries the post-translational modification N5-methylglutamine.

It belongs to the universal ribosomal protein uL3 family. As to quaternary structure, part of the 50S ribosomal subunit. Forms a cluster with proteins L14 and L19. In terms of processing, methylated by PrmB.

One of the primary rRNA binding proteins, it binds directly near the 3'-end of the 23S rRNA, where it nucleates assembly of the 50S subunit. The sequence is that of Large ribosomal subunit protein uL3 from Rhodospirillum centenum (strain ATCC 51521 / SW).